Consider the following 203-residue polypeptide: MDAMAVTMTIIAYLLGSISSAVLICRVLRLPDPRGVGSNNPGATNVLRIGGKGAAAAVLLCDMLKGTIPVWSAYYLGIEPVLLGVIAIAACLGHMYPLFFHFQGGKGVATALGAIAPIGLDLTGMIMATWLLVAILFRYSSLAALVTVLLAPMYTWMIKPQYTLPVGMLCCLIVLRHHQNIRRLFTGEEPKIGEKKLQMPKSQ.

4 consecutive transmembrane segments (helical) span residues 4–24 (MAVT…AVLI), 80–100 (PVLL…PLFF), 117–137 (PIGL…AILF), and 139–159 (YSSL…WMIK).

This sequence belongs to the PlsY family. In terms of assembly, probably interacts with PlsX.

It localises to the cell inner membrane. It carries out the reaction an acyl phosphate + sn-glycerol 3-phosphate = a 1-acyl-sn-glycero-3-phosphate + phosphate. It participates in lipid metabolism; phospholipid metabolism. Its function is as follows. Catalyzes the transfer of an acyl group from acyl-phosphate (acyl-PO(4)) to glycerol-3-phosphate (G3P) to form lysophosphatidic acid (LPA). This enzyme utilizes acyl-phosphate as fatty acyl donor, but not acyl-CoA or acyl-ACP. This Vibrio vulnificus (strain YJ016) protein is Glycerol-3-phosphate acyltransferase.